The following is a 908-amino-acid chain: WD repeat-containing protein 44 (908 aa).

Positions 1 to 163 are binding activity; it reads MMPLKMCTWG…SSADQLDASK (163 aa). Phosphoserine occurs at positions 17, 40, 61, 71, 86, and 116. Polar residues-rich tracts occupy residues 108–120 and 148–157; these read QQGS…QNAA and NNLTEVSSAD. Disordered regions lie at residues 108-158, 202-273, 309-341, 391-418, and 454-474; these read QQGS…SADQ, APAK…KDNI, TAQE…RELT, VSND…RLKQ, and DEVF…GMPY. Phosphothreonine is present on residues T151 and T211. The tract at residues 203 to 249 is important for interaction with ARHGAP26 AND ARHGAP10; it reads PAKPPRHLTPEPDIVASTKKPVPARPPPPTNFPPPRPPPPSRPAPPP. A compositionally biased stretch (pro residues) spans 225 to 248; it reads PARPPPPTNFPPPRPPPPSRPAPP. The residue at position 254 (S254) is a Phosphoserine. Basic and acidic residues predominate over residues 254 to 270; the sequence is SDLEFEALKTPDLDVPK. Residue T263 is modified to Phosphothreonine. The tract at residues 326-339 is important for interaction with RAB11A; sequence VMGPQRPRSNSGRE. Phosphoserine is present on residues S334 and S336. Phosphothreonine occurs at positions 341 and 396. Phosphoserine occurs at positions 398, 465, 466, and 467. The segment covering 462–471 has biased composition (acidic residues); that stretch reads DDPSSSDDEG. Y474 carries the phosphotyrosine modification. The stretch at 504-543 is one WD 1 repeat; it reads EHMGAVWTMKFSHCGRLLASAGQDNIVRIWALKNAFDYFN. Residues 552–587 are disordered; sequence EGRVSPSPSQESLSSSKSDTDMGVCSGTDEDPDDKN. Phosphoserine is present on residues S556 and S560. Low complexity predominate over residues 556–568; the sequence is SPSPSQESLSSSK. 5 WD repeats span residues 600 to 638, 640 to 680, 685 to 724, 735 to 774, and 779 to 818; these read GHTA…CLCC, QHID…VALW, GQTK…YHTQ, KVGR…LSMK, and VNSS…SKFT.

Interacts preferentially with the GTP-bound form of RAB11 when membrane-associated. Interacts with GRAF1/ARHGAP26 or GRAF2/ARHGAP10; the interaction connects the endoplasmic reticulum (ER) with the endosomal tubule. Interacts with VAPA (via MSP domain) or VAPB (via MSP domain); the interaction connects the ER with the endosomal tubule. Does not bind to other Rab and Rho small G proteins. In terms of processing, phosphorylated by ATK1; the phosphorylation stabilizes its interaction with RAB11A and RAB11B. As to expression, expressed in heart; brain; spleen; lung; liver; muscle and kidney.

The protein localises to the cytoplasm. It localises to the cytosol. The protein resides in the perinuclear region. Its subcellular location is the endosome membrane. It is found in the golgi apparatus. The protein localises to the trans-Golgi network. Its function is as follows. Downstream effector for Rab11 which regulates Rab11 intracellular membrane trafficking functions such as endocytic recycling, intracellular ciliogenesis and protein export. ATK1-mediated phosphorylation of WDR44 induces binding to Rab11 which activates endocytic recycling of transferrin receptor back to the plasma membrane. When bound to Rab11, prevents the formation of the ciliogenic Rab11-Rabin8/RAB3IP-RAB11FIP3 complex, therefore inhibiting preciliary trafficking and ciliogenesis. May participate in neo-synthesized protein export by connecting the endoplasmic reticulum (ER) with the endosomal tubule via direct interactions with the integral ER proteins VAPA or VAPB and the endosomal protein GRAFs (GRAF1/ARHGAP26 or GRAF2/ARHGAP10), which facilitates the transfer of proteins such as E-cadherin, MPP14 and CFTR into a Rab8-Rab10-Rab11-dependent export route. The polypeptide is WD repeat-containing protein 44 (Rattus norvegicus (Rat)).